The sequence spans 202 residues: Imidazoleglycerol-phosphate dehydratase (202 aa).

This sequence belongs to the imidazoleglycerol-phosphate dehydratase family.

It localises to the cytoplasm. The catalysed reaction is D-erythro-1-(imidazol-4-yl)glycerol 3-phosphate = 3-(imidazol-4-yl)-2-oxopropyl phosphate + H2O. Its pathway is amino-acid biosynthesis; L-histidine biosynthesis; L-histidine from 5-phospho-alpha-D-ribose 1-diphosphate: step 6/9. This Rhizobium johnstonii (strain DSM 114642 / LMG 32736 / 3841) (Rhizobium leguminosarum bv. viciae) protein is Imidazoleglycerol-phosphate dehydratase.